We begin with the raw amino-acid sequence, 264 residues long: 2-hydroxyhexa-2,4-dienoate hydratase (264 aa).

The protein belongs to the hydratase/decarboxylase family.

It catalyses the reaction (2Z,4Z)-2-hydroxyhexa-2,4-dienoate + H2O = 4-hydroxy-2-oxohexanoate. Its function is as follows. Involved in the catatabolism of testosterone. Catalyzes the hydration of 2-hydroxyhexa-2,4-dienoic acid to 4-hydroxy-2-oxohexanoic acid. This chain is 2-hydroxyhexa-2,4-dienoate hydratase (tesE), found in Comamonas testosteroni (Pseudomonas testosteroni).